A 130-amino-acid chain; its full sequence is Anti-adapter protein IraD (130 aa).

This sequence belongs to the GpW/Gp25 family. IraD subfamily. In terms of assembly, interacts with RssB.

The protein localises to the cytoplasm. In terms of biological role, inhibits RpoS proteolysis by regulating RssB activity, thereby increasing the stability of the sigma stress factor RpoS during oxidative stress. Its effect on RpoS stability is due to its interaction with RssB, which probably blocks the interaction of RssB with RpoS, and the consequent delivery of the RssB-RpoS complex to the ClpXP protein degradation pathway. This is Anti-adapter protein IraD from Escherichia coli (strain K12 / MC4100 / BW2952).